The sequence spans 103 residues: Conantokin R1-A (103 aa).

An N-terminal signal peptide occupies residues 1 to 21 (MQLYTYLYLLVPLVTFHLILG). The propeptide occupies 22 to 79 (TGTLDHGGALTERRSTDATALKPEPVLQKSAARSTDDNGKDRLTQMKRILKKRGNNPR). The tract at residues 34–83 (RRSTDATALKPEPVLQKSAARSTDDNGKDRLTQMKRILKKRGNNPRADEE) is disordered. Positions 55-65 (STDDNGKDRLT) are enriched in basic and acidic residues. Residues Glu82, Glu83, and Glu89 each carry the 4-carboxyglutamate modification.

Belongs to the conotoxin B superfamily. It depends on Ca(2+) as a cofactor. The cofactor is Mg(2+). In terms of tissue distribution, expressed by the venom duct.

The protein localises to the secreted. Conantokins inhibit N-methyl-D-aspartate (NMDA) receptors. This toxin has the highest potency for the NR2B/GRIN2B subunit (IC(50)=0.11 uM), followed by NR2D/GRIN2D (IC(50)=0.48 uM), NR2A/GRIN2A (IC(50)=2.1 uM), and NR2C/GRIN2C (IC(50)=6.1 uM) subunits when tested on rat receptors. This is Conantokin R1-A from Conus rolani (Cone snail).